The sequence spans 497 residues: Aluminum-activated malate transporter 10 (497 aa).

Helical transmembrane passes span 66–86 (KVVHCLKVGLALSLVSIFYYM), 88–108 (PLYDGVGGNAMWAIMTVVVVF), 123–143 (VVATILAGSLGIAVHWVATQS), 148–168 (VFVIGCSVFLFAFAATYSRFV), 173–193 (ARFDYGAMIFILTFSLVSVGG), and 210–230 (IAIGTSICIIITVFFCPIWAG). Disordered stretches follow at residues 413–437 (PIETNKPEEVPSEEENKVDSEERTT) and 476–497 (DFEQDSKKKTGDNNTKQPPLSS). A compositionally biased stretch (basic and acidic residues) spans 417-436 (NKPEEVPSEEENKVDSEERT). A compositionally biased stretch (polar residues) spans 487–497 (DNNTKQPPLSS).

It belongs to the aromatic acid exporter (TC 2.A.85) family.

The protein resides in the membrane. Malate transporter. This is Aluminum-activated malate transporter 10 (ALMT10) from Arabidopsis thaliana (Mouse-ear cress).